The sequence spans 151 residues: 6,7-dimethyl-8-ribityllumazine synthase (151 aa).

Residues F23, 55–57, and 79–81 contribute to the 5-amino-6-(D-ribitylamino)uracil site; these read AYE and AVI. 84–85 provides a ligand contact to (2S)-2-hydroxy-3-oxobutyl phosphate; that stretch reads AT. H87 acts as the Proton donor in catalysis. F111 is a 5-amino-6-(D-ribitylamino)uracil binding site. R125 is a (2S)-2-hydroxy-3-oxobutyl phosphate binding site.

Belongs to the DMRL synthase family.

The enzyme catalyses (2S)-2-hydroxy-3-oxobutyl phosphate + 5-amino-6-(D-ribitylamino)uracil = 6,7-dimethyl-8-(1-D-ribityl)lumazine + phosphate + 2 H2O + H(+). Its pathway is cofactor biosynthesis; riboflavin biosynthesis; riboflavin from 2-hydroxy-3-oxobutyl phosphate and 5-amino-6-(D-ribitylamino)uracil: step 1/2. Functionally, catalyzes the formation of 6,7-dimethyl-8-ribityllumazine by condensation of 5-amino-6-(D-ribitylamino)uracil with 3,4-dihydroxy-2-butanone 4-phosphate. This is the penultimate step in the biosynthesis of riboflavin. The sequence is that of 6,7-dimethyl-8-ribityllumazine synthase from Leptospira interrogans serogroup Icterohaemorrhagiae serovar copenhageni (strain Fiocruz L1-130).